A 101-amino-acid polypeptide reads, in one-letter code: NAD(P)H-quinone oxidoreductase subunit 4L, chloroplastic (101 aa).

Helical transmembrane passes span 2 to 22 (ILEHVLVLSAYLFFIGLYGLI), 32 to 52 (MCLELILNAVNMNFVTFSDFF), and 61 to 81 (IFCIFVIAIAAAEAAIGLAIV).

Belongs to the complex I subunit 4L family. In terms of assembly, NDH is composed of at least 16 different subunits, 5 of which are encoded in the nucleus.

It is found in the plastid. The protein localises to the chloroplast thylakoid membrane. The enzyme catalyses a plastoquinone + NADH + (n+1) H(+)(in) = a plastoquinol + NAD(+) + n H(+)(out). It carries out the reaction a plastoquinone + NADPH + (n+1) H(+)(in) = a plastoquinol + NADP(+) + n H(+)(out). Its function is as follows. NDH shuttles electrons from NAD(P)H:plastoquinone, via FMN and iron-sulfur (Fe-S) centers, to quinones in the photosynthetic chain and possibly in a chloroplast respiratory chain. The immediate electron acceptor for the enzyme in this species is believed to be plastoquinone. Couples the redox reaction to proton translocation, and thus conserves the redox energy in a proton gradient. In Aethionema cordifolium (Lebanon stonecress), this protein is NAD(P)H-quinone oxidoreductase subunit 4L, chloroplastic.